A 509-amino-acid chain; its full sequence is Probable malate:quinone oxidoreductase (509 aa).

Residues 490–509 (LGLNEKEPVSGASEKELVYS) form a disordered region. Over residues 493–509 (NEKEPVSGASEKELVYS) the composition is skewed to basic and acidic residues.

This sequence belongs to the MQO family. FAD serves as cofactor.

It carries out the reaction (S)-malate + a quinone = a quinol + oxaloacetate. The protein operates within carbohydrate metabolism; tricarboxylic acid cycle; oxaloacetate from (S)-malate (quinone route): step 1/1. This chain is Probable malate:quinone oxidoreductase, found in Geobacillus sp. (strain WCH70).